Consider the following 573-residue polypeptide: Glutamate--tRNA ligase (573 aa).

Residues 107 to 117 (PNPDGAFHLGN) carry the 'HIGH' region motif.

The protein belongs to the class-I aminoacyl-tRNA synthetase family. Glutamate--tRNA ligase type 2 subfamily.

Its subcellular location is the cytoplasm. The enzyme catalyses tRNA(Glu) + L-glutamate + ATP = L-glutamyl-tRNA(Glu) + AMP + diphosphate. Its function is as follows. Catalyzes the attachment of glutamate to tRNA(Glu) in a two-step reaction: glutamate is first activated by ATP to form Glu-AMP and then transferred to the acceptor end of tRNA(Glu). In Thermococcus kodakarensis (strain ATCC BAA-918 / JCM 12380 / KOD1) (Pyrococcus kodakaraensis (strain KOD1)), this protein is Glutamate--tRNA ligase.